Consider the following 103-residue polypeptide: MGNYYSRRKSRKHITTVALIILLLLLFLFLYAKASSSSPNIHHHSTHGSLKKSGNLDPKLHDLDSNAASSRGSKYTNYEGGGEDVFEDGKRRVFTGPNPLHNR.

Positions 1 to 34 (MGNYYSRRKSRKHITTVALIILLLLLFLFLYAKA) are cleaved as a signal peptide. Residues 37 to 103 (SSPNIHHHST…FTGPNPLHNR (67 aa)) form a disordered region. A compositionally biased stretch (basic residues) spans 41–50 (IHHHSTHGSL). Over residues 66 to 76 (NAASSRGSKYT) the composition is skewed to polar residues. Proline 97 bears the Hydroxyproline mark. Proline 97 is a glycosylation site (O-linked (Ara...) hydroxyproline).

It belongs to the CLV3/ESR signal peptide family. The O-glycosylation (arabinosylation) of the hydroxyproline Pro-97 enhances binding affinity of the CLE22p peptide for its receptor. Mostly expressed in stems and apex, and, to a lower extent, in seedlings, leaves, flowers and siliques.

The protein localises to the secreted. It localises to the extracellular space. Its function is as follows. Extracellular signal peptide that regulates cell fate. Represses root apical meristem maintenance. This is CLAVATA3/ESR (CLE)-related protein 22 from Arabidopsis thaliana (Mouse-ear cress).